We begin with the raw amino-acid sequence, 360 residues long: MKASLLNKLDTLQDRFEELTALLGDAEVISDQTRFRAYSREYAEVEPVIACYVGWRKVQDDLEGAQALLKDADPDLREMAVEEVREAKEQLVGLESQLQRMLLPKDPNDGRNVFLEIRAGTGGDEAAIFSGDLFRMYSRYAEKRGWRLEILSENEGEHGGYKEIIARVEGDSVYGKLKFESGAHRVQRVPETESQGRIHTSACTVAVLPEPDEQVAIEINPADLRVDTYRASGAGGQHVNKTDSAIRITHLPTGIVVECQEERSQHKNRARAMSWLSAKLNDMQTSAAQNAIASERKLLVGSGDRSERIRTYNYPQGRVTDHRINLTLYSLDDILAGGVDAVIEPLLAEYQADQLAALGD.

N5-methylglutamine is present on Q237.

This sequence belongs to the prokaryotic/mitochondrial release factor family. Post-translationally, methylated by PrmC. Methylation increases the termination efficiency of RF1.

The protein localises to the cytoplasm. Peptide chain release factor 1 directs the termination of translation in response to the peptide chain termination codons UAG and UAA. In Pseudomonas entomophila (strain L48), this protein is Peptide chain release factor 1.